An 883-amino-acid polypeptide reads, in one-letter code: Integrator complex subunit 6 (883 aa).

Positions 3–227 (ILLFLIDTSA…QCLESLVQKV (225 aa)) constitute a VWFA domain. The Inhibitory loop motif lies at 625–632 (MMIDEADE). The segment at 666-686 (RRQSPAVNSHIGGKGPPAPMT) is disordered. Serine 800 is subject to Phosphoserine.

It belongs to the Integrator subunit 6 family. In terms of assembly, component of the Integrator complex, composed of core subunits INTS1, INTS2, INTS3, INTS4, INTS5, INTS6, INTS7, INTS8, INTS9/RC74, INTS10, INTS11/CPSF3L, INTS12, INTS13, INTS14 and INTS15. The core complex associates with protein phosphatase 2A subunits PPP2CA and PPP2R1A, to form the Integrator-PP2A (INTAC) complex.

Its subcellular location is the nucleus. It localises to the chromosome. Its function is as follows. Component of the integrator complex, a multiprotein complex that terminates RNA polymerase II (Pol II) transcription in the promoter-proximal region of genes. The integrator complex provides a quality checkpoint during transcription elongation by driving premature transcription termination of transcripts that are unfavorably configured for transcriptional elongation: the complex terminates transcription by (1) catalyzing dephosphorylation of the C-terminal domain (CTD) of Pol II subunit POLR2A/RPB1 and SUPT5H/SPT5, (2) degrading the exiting nascent RNA transcript via endonuclease activity and (3) promoting the release of Pol II from bound DNA. The integrator complex is also involved in terminating the synthesis of non-coding Pol II transcripts, such as enhancer RNAs (eRNAs), small nuclear RNAs (snRNAs), telomerase RNAs and long non-coding RNAs (lncRNAs). Within the integrator complex, INTS6 acts as a molecular adapter that promotes assembly of protein phosphatase 2A (PP2A) subunits to the integrator core complex, promoting recruitment of PP2A to transcription pause-release checkpoint. Mediates recruitment of cytoplasmic dynein to the nuclear envelope, probably as component of the integrator complex. This chain is Integrator complex subunit 6 (Ints6), found in Mus musculus (Mouse).